Consider the following 884-residue polypeptide: Protein translocase subunit SecA (884 aa).

ATP-binding positions include Gln82, 100–104 (GEGKT), and Asp491.

It belongs to the SecA family.

It is found in the plastid. It localises to the chloroplast stroma. The protein resides in the chloroplast thylakoid membrane. The enzyme catalyses ATP + H2O + cellular proteinSide 1 = ADP + phosphate + cellular proteinSide 2.. Its function is as follows. Has a central role in coupling the hydrolysis of ATP to the transfer of proteins across the thylakoid membrane. In Olisthodiscus luteus (Marine phytoflagellate), this protein is Protein translocase subunit SecA.